We begin with the raw amino-acid sequence, 354 residues long: Caffeate O-methyltransferase-like protein 2 (354 aa).

Positions 198, 221, 242, and 255 each coordinate S-adenosyl-L-homocysteine. H259 functions as the Proton acceptor in the catalytic mechanism. Residues E287 and E319 contribute to the active site.

It belongs to the class I-like SAM-binding methyltransferase superfamily. Cation-independent O-methyltransferase family. COMT subfamily.

The polypeptide is Caffeate O-methyltransferase-like protein 2 (Oryza sativa subsp. japonica (Rice)).